The primary structure comprises 1016 residues: Probable outer membrane protein PmpH (1016 aa).

The signal sequence occupies residues 1–24 (MPFSLRSTSFCFLACLCSYSYGFA). Positions 697-1016 (GELVPNSLWV…FVSMGLNRIF (320 aa)) constitute an Autotransporter domain.

The protein belongs to the PMP outer membrane protein family.

It is found in the secreted. It localises to the cell wall. Its subcellular location is the cell outer membrane. This chain is Probable outer membrane protein PmpH (pmpH), found in Chlamydia trachomatis serovar D (strain ATCC VR-885 / DSM 19411 / UW-3/Cx).